The following is a 108-amino-acid chain: PTS system cellobiose-specific EIIB component (108 aa).

Residues 3–108 form the PTS EIIB type-3 domain; sequence DKVIALACAA…VLAAAENLMN (106 aa). Cysteine 10 functions as the Phosphocysteine intermediate in the catalytic mechanism. Phosphocysteine; by EIIA is present on cysteine 10.

It catalyses the reaction D-cellobiose(out) + N(pros)-phospho-L-histidyl-[protein] = 6-phospho-beta-D-glucosyl-(1-&gt;4)-D-glucose(in) + L-histidyl-[protein]. The phosphoenolpyruvate-dependent sugar phosphotransferase system (sugar PTS), a major carbohydrate active transport system, catalyzes the phosphorylation of incoming sugar substrates concomitantly with their translocation across the cell membrane. Involved in cellobiose transport with PtcA and CelB. This system can also transport lactose. The protein is PTS system cellobiose-specific EIIB component of Lactococcus lactis subsp. lactis (strain IL1403) (Streptococcus lactis).